An 860-amino-acid polypeptide reads, in one-letter code: Leucine--tRNA ligase (860 aa).

The 'HIGH' region signature appears at 42–52; the sequence is PYPSGRLHMGH. A 'KMSKS' region motif is present at residues 619–623; sequence KMSKS. Lysine 622 provides a ligand contact to ATP.

The protein belongs to the class-I aminoacyl-tRNA synthetase family.

The protein localises to the cytoplasm. The enzyme catalyses tRNA(Leu) + L-leucine + ATP = L-leucyl-tRNA(Leu) + AMP + diphosphate. This is Leucine--tRNA ligase from Salmonella paratyphi A (strain ATCC 9150 / SARB42).